We begin with the raw amino-acid sequence, 466 residues long: Ribulose bisphosphate carboxylase large chain (466 aa).

K5 carries the post-translational modification N6,N6,N6-trimethyllysine. Positions 114 and 164 each coordinate substrate. Residue K166 is the Proton acceptor of the active site. K168 is a binding site for substrate. Residues K192, D194, and E195 each coordinate Mg(2+). K192 carries the post-translational modification N6-carboxylysine. The active-site Proton acceptor is the H285. 3 residues coordinate substrate: R286, H318, and S370.

This sequence belongs to the RuBisCO large chain family. Type I subfamily. As to quaternary structure, heterohexadecamer of 8 large chains and 8 small chains; disulfide-linked. The disulfide link is formed within the large subunit homodimers. Mg(2+) is required as a cofactor. Post-translationally, the disulfide bond which can form in the large chain dimeric partners within the hexadecamer appears to be associated with oxidative stress and protein turnover.

It localises to the plastid. Its subcellular location is the chloroplast. The enzyme catalyses 2 (2R)-3-phosphoglycerate + 2 H(+) = D-ribulose 1,5-bisphosphate + CO2 + H2O. The catalysed reaction is D-ribulose 1,5-bisphosphate + O2 = 2-phosphoglycolate + (2R)-3-phosphoglycerate + 2 H(+). RuBisCO catalyzes two reactions: the carboxylation of D-ribulose 1,5-bisphosphate, the primary event in carbon dioxide fixation, as well as the oxidative fragmentation of the pentose substrate in the photorespiration process. Both reactions occur simultaneously and in competition at the same active site. This Adenium obesum (Desert rose) protein is Ribulose bisphosphate carboxylase large chain.